The following is a 234-amino-acid chain: NAD-dependent protein deacylase (234 aa).

The 234-residue stretch at 1-234 (MTKQVRIVVL…LVPHYLAQFL (234 aa)) folds into the Deacetylase sirtuin-type domain. 12 to 31 (GAGISAESGIRTFRATDGLW) serves as a coordination point for NAD(+). Substrate is bound by residues Y56 and R59. 93 to 96 (QNVD) is a binding site for NAD(+). The Proton acceptor role is filled by H111. Zn(2+) contacts are provided by C119 and C138. Residues 178–180 (GTS), 204–206 (NLE), and A222 each bind NAD(+).

This sequence belongs to the sirtuin family. Class III subfamily. Zn(2+) is required as a cofactor.

It localises to the cytoplasm. The catalysed reaction is N(6)-acetyl-L-lysyl-[protein] + NAD(+) + H2O = 2''-O-acetyl-ADP-D-ribose + nicotinamide + L-lysyl-[protein]. The enzyme catalyses N(6)-succinyl-L-lysyl-[protein] + NAD(+) + H2O = 2''-O-succinyl-ADP-D-ribose + nicotinamide + L-lysyl-[protein]. Functionally, NAD-dependent lysine deacetylase and desuccinylase that specifically removes acetyl and succinyl groups on target proteins. Modulates the activities of several proteins which are inactive in their acylated form. The sequence is that of NAD-dependent protein deacylase from Pasteurella multocida (strain Pm70).